A 210-amino-acid chain; its full sequence is Redox-sensing transcriptional repressor Rex (210 aa).

The segment at residues 17 to 56 (KYHRYLNELMKNDVDRISSKELGEKIGFTASQIRQDLNCF) is a DNA-binding region (H-T-H motif). 91–96 (GAGNIG) contributes to the NAD(+) binding site.

The protein belongs to the transcriptional regulatory Rex family. In terms of assembly, homodimer.

The protein resides in the cytoplasm. In terms of biological role, modulates transcription in response to changes in cellular NADH/NAD(+) redox state. This chain is Redox-sensing transcriptional repressor Rex, found in Clostridium botulinum (strain Alaska E43 / Type E3).